The chain runs to 382 residues: Putative glutamate--cysteine ligase 2-1 (382 aa).

This sequence belongs to the glutamate--cysteine ligase type 2 family. YbdK subfamily.

It catalyses the reaction L-cysteine + L-glutamate + ATP = gamma-L-glutamyl-L-cysteine + ADP + phosphate + H(+). Its function is as follows. ATP-dependent carboxylate-amine ligase which exhibits weak glutamate--cysteine ligase activity. This chain is Putative glutamate--cysteine ligase 2-1, found in Frankia casuarinae (strain DSM 45818 / CECT 9043 / HFP020203 / CcI3).